We begin with the raw amino-acid sequence, 336 residues long: GTPase Obg (336 aa).

The region spanning 1–159 (MKFIDEATII…RRLQLELILL (159 aa)) is the Obg domain. An OBG-type G domain is found at 160 to 333 (ADVGLLGLPN…LCRDIMLFIN (174 aa)). Residues 166-173 (GLPNVGKS), 191-195 (FTTLV), 213-216 (DIPG), 283-286 (NKLD), and 314-316 (SAM) each bind GTP. Positions 173 and 193 each coordinate Mg(2+).

The protein belongs to the TRAFAC class OBG-HflX-like GTPase superfamily. OBG GTPase family. In terms of assembly, monomer. The cofactor is Mg(2+).

The protein resides in the cytoplasm. Functionally, an essential GTPase which binds GTP, GDP and possibly (p)ppGpp with moderate affinity, with high nucleotide exchange rates and a fairly low GTP hydrolysis rate. Plays a role in control of the cell cycle, stress response, ribosome biogenesis and in those bacteria that undergo differentiation, in morphogenesis control. The protein is GTPase Obg of Baumannia cicadellinicola subsp. Homalodisca coagulata.